The sequence spans 449 residues: MPLFAIGLNHDSAPVAVRESLAFNAEALGDALQSARSETGADEVAILSTCNRTEIYIRLPHTDPEVVIGWLTRHQRVDLRKVRPHLYVRRSTEAMRHLMRVSAGLDSLVLGEPQILGQVKDAYHKAANAGCLGAVLERLFQHAFAVAKQVRTDTDIGSNPISVAFAAVTMAKQIFDDFPKRTAVLVGAGETIELVARHLGQQGIGQVLVANRNVERAKRLAEAHDGEAMSLNDLPRRLPEADVVVSSTGSSLPILGKGTVERAVRARRHKPMFMLDLAVPRDIEPEAGEMDDVYLYTVDDLRGVVAENMRSRQDAATQAEAIVEQQVRHYLEWRRARDAGEAIRSFRSRAESYARATRAQAARQLSRGEDPFEVIEWLTHTLTRRLVHAPTVGLRAAAATGDRTRIQHALETLAIDQQLVERSSEGDDSQQAGADGGAARGDRRAAGGS.

Substrate-binding positions include T49 to R52, S107, E112 to Q114, and Q118. C50 functions as the Nucleophile in the catalytic mechanism. NADP(+) is bound at residue G187 to I192. The interval Q418–S449 is disordered. Basic and acidic residues predominate over residues R440–S449.

This sequence belongs to the glutamyl-tRNA reductase family. Homodimer.

The catalysed reaction is (S)-4-amino-5-oxopentanoate + tRNA(Glu) + NADP(+) = L-glutamyl-tRNA(Glu) + NADPH + H(+). Its pathway is porphyrin-containing compound metabolism; protoporphyrin-IX biosynthesis; 5-aminolevulinate from L-glutamyl-tRNA(Glu): step 1/2. Its function is as follows. Catalyzes the NADPH-dependent reduction of glutamyl-tRNA(Glu) to glutamate 1-semialdehyde (GSA). The polypeptide is Glutamyl-tRNA reductase (Halorhodospira halophila (strain DSM 244 / SL1) (Ectothiorhodospira halophila (strain DSM 244 / SL1))).